Here is a 250-residue protein sequence, read N- to C-terminus: Aquaporin TIP2-3 (250 aa).

Methionine 1 is modified (N-acetylmethionine). Topologically, residues 1 to 24 (MVKIEVGSVGDSFSVSSLKAYLSE) are cytoplasmic. N6,N6-dimethyllysine is present on lysine 3. A helical transmembrane segment spans residues 25–45 (FIATLLFVFAGVGSAVAFAKL). Residues 46 to 54 (TSDGALDPA) are Vacuolar-facing. The chain crosses the membrane as a helical span at residues 55–75 (GLVAIAIAHAFALFVGVSIAA). The Cytoplasmic portion of the chain corresponds to 76 to 101 (NISGGHLNPAVTLGLAIGGNITLITG). Positions 83–85 (NPA) match the NPA 1 motif. Residues 102-122 (FFYWIAQCLGSIVACLLLVFV) form a helical membrane-spanning segment. The Vacuolar portion of the chain corresponds to 123–134 (TNGKSVPTHGVS). The helical transmembrane segment at 135–155 (AGLGAVEGVVMEIVVTFALVY) threads the bilayer. Residues 156-168 (TVYATAADPKKGS) are Cytoplasmic-facing. The chain crosses the membrane as a helical span at residues 169–189 (LGTIAPIAIGFIVGANILAAG). At 190–217 (PFSGGSMNPARSFGPAVVSGDLSQIWIY) the chain is on the vacuolar side. The short motif at 197 to 199 (NPA) is the NPA 2 element. The helical transmembrane segment at 218-238 (WVGPLVGGALAGLIYGDVFIG) threads the bilayer. Residues 239 to 250 (SYEAVETREIRV) lie on the Cytoplasmic side of the membrane.

This sequence belongs to the MIP/aquaporin (TC 1.A.8) family. TIP (TC 1.A.8.10) subfamily. Interacts with cucumber mosaic virus (CMV) Protein 1a. Widely expressed.

It localises to the vacuole membrane. In terms of biological role, transports methylammonium or ammonium in yeast cells, preferentially at high medium pH. May participate in vacuolar compartmentation and detoxification of ammonium. This is Aquaporin TIP2-3 (TIP2-3) from Arabidopsis thaliana (Mouse-ear cress).